A 358-amino-acid polypeptide reads, in one-letter code: Testis-specific serine/threonine-protein kinase 2 (358 aa).

Residues 12–272 enclose the Protein kinase domain; the sequence is YIVGINLGKG…IDEILSHSWL (261 aa). ATP is bound by residues 18-26 and Lys41; that span reads LGKGSYAKV. Residue Asp136 is the Proton acceptor of the active site. Composition is skewed to basic and acidic residues over residues 296–315 and 329–358; these read DCKL…DHKL and NEDR…KAST. The disordered stretch occupies residues 296–358; it reads DCKLDTRPGS…SGAEVEKAST (63 aa).

This sequence belongs to the protein kinase superfamily. CAMK Ser/Thr protein kinase family. As to quaternary structure, interacts with TSSK1B. Interacts with HSP90; this interaction stabilizes TSSK2. It depends on Mg(2+) as a cofactor. Autophosphorylated. Post-translationally, ubiquitinated; HSP90 activity negatively regulates ubiquitination and degradation. In terms of tissue distribution, testis-specific. Expressed only in the spermatids postmeiotically at the final stages of cytodifferentiation in the seminiferous tubules (at protein level). Not detected in released sperms in the lumen of the seminiferous tubules. Also present in the epididymal sperm (at protein level).

It localises to the cytoplasm. The protein localises to the cytoskeleton. The protein resides in the microtubule organizing center. Its subcellular location is the centrosome. It is found in the centriole. It localises to the cytoplasmic vesicle. The protein localises to the secretory vesicle. The protein resides in the acrosome. The catalysed reaction is L-seryl-[protein] + ATP = O-phospho-L-seryl-[protein] + ADP + H(+). It carries out the reaction L-threonyl-[protein] + ATP = O-phospho-L-threonyl-[protein] + ADP + H(+). Its activity is regulated as follows. Activated by phosphorylation on Thr-174, potentially by autophosphorylation. Functionally, testis-specific serine/threonine-protein kinase required during spermatid development. Phosphorylates 'Ser-281' of TSKS and SPAG16. Involved in the late stages of spermatogenesis, during the reconstruction of the cytoplasm. During spermatogenesis, required for the transformation of a ring-shaped structure around the base of the flagellum originating from the chromatoid body. This Mus musculus (Mouse) protein is Testis-specific serine/threonine-protein kinase 2 (Tssk2).